A 273-amino-acid chain; its full sequence is Dermonecrotic toxin LruSicTox-alphaIC1b (273 aa).

Histidine 5 is a catalytic residue. 2 residues coordinate Mg(2+): glutamate 25 and aspartate 27. The active-site Nucleophile is histidine 41. Cystine bridges form between cysteine 45/cysteine 51 and cysteine 47/cysteine 190. Residue aspartate 85 participates in Mg(2+) binding.

It belongs to the arthropod phospholipase D family. Class II subfamily. The cofactor is Mg(2+). In terms of tissue distribution, expressed by the venom gland.

The protein resides in the secreted. The catalysed reaction is an N-(acyl)-sphingosylphosphocholine = an N-(acyl)-sphingosyl-1,3-cyclic phosphate + choline. The enzyme catalyses an N-(acyl)-sphingosylphosphoethanolamine = an N-(acyl)-sphingosyl-1,3-cyclic phosphate + ethanolamine. It carries out the reaction a 1-acyl-sn-glycero-3-phosphocholine = a 1-acyl-sn-glycero-2,3-cyclic phosphate + choline. It catalyses the reaction a 1-acyl-sn-glycero-3-phosphoethanolamine = a 1-acyl-sn-glycero-2,3-cyclic phosphate + ethanolamine. Dermonecrotic toxins cleave the phosphodiester linkage between the phosphate and headgroup of certain phospholipids (sphingolipid and lysolipid substrates), forming an alcohol (often choline) and a cyclic phosphate. This toxin acts on sphingomyelin (SM). It may also act on ceramide phosphoethanolamine (CPE), lysophosphatidylcholine (LPC) and lysophosphatidylethanolamine (LPE), but not on lysophosphatidylserine (LPS), and lysophosphatidylglycerol (LPG). It acts by transphosphatidylation, releasing exclusively cyclic phosphate products as second products. Induces dermonecrosis, hemolysis, increased vascular permeability, edema, inflammatory response, and platelet aggregation. The protein is Dermonecrotic toxin LruSicTox-alphaIC1b of Loxosceles rufescens (Mediterranean recluse spider).